A 240-amino-acid polypeptide reads, in one-letter code: Large ribosomal subunit protein bL25 (240 aa).

The disordered stretch occupies residues methionine 1–glutamate 23. Positions threonine 10 to alanine 19 are enriched in low complexity.

Belongs to the bacterial ribosomal protein bL25 family. CTC subfamily. Part of the 50S ribosomal subunit; part of the 5S rRNA/L5/L18/L25 subcomplex. Contacts the 5S rRNA. Binds to the 5S rRNA independently of L5 and L18.

This is one of the proteins that binds to the 5S RNA in the ribosome where it forms part of the central protuberance. In Afipia carboxidovorans (strain ATCC 49405 / DSM 1227 / KCTC 32145 / OM5) (Oligotropha carboxidovorans), this protein is Large ribosomal subunit protein bL25.